The chain runs to 282 residues: Probable metal transport system membrane protein TM_0125 (282 aa).

9 helical membrane passes run 33 to 53 (AFVG…IVVF), 58 to 78 (FIGD…TLIG), 79 to 99 (ADHR…VSLF), 109 to 129 (AIGI…SVSG), 148 to 168 (STDV…TVVF), 184 to 204 (FYGI…AITV), 210 to 230 (VVGV…SKIF), 234 to 254 (FWSL…AGFL), and 259 to 279 (LDLP…LPML).

The protein belongs to the ABC-3 integral membrane protein family.

The protein resides in the cell inner membrane. Functionally, part of an ATP-driven transport system TM_0123/TM_0124/TM_0125 for a metal. In Thermotoga maritima (strain ATCC 43589 / DSM 3109 / JCM 10099 / NBRC 100826 / MSB8), this protein is Probable metal transport system membrane protein TM_0125.